Consider the following 91-residue polypeptide: Islet amyloid polypeptide (91 aa).

Residues 1-22 form the signal peptide; sequence MGILKLPVVLIVLCVALNHLEG. Residues 23 to 33 constitute a propeptide that is removed on maturation; that stretch reads GGKPTESHQME. A disulfide bond links cysteine 37 and cysteine 42. Residue tyrosine 72 is modified to Tyrosine amide. A propeptide spanning residues 78 to 91 is cleaved from the precursor; sequence VEILKREPLSYLPI.

Belongs to the calcitonin family. As to quaternary structure, can form homodimers. Interacts with IDE and INS. Interaction with INS inhibits homodimerization and fibril formation.

The protein resides in the secreted. Functionally, amylin/IAPP is a glucoregulatory peptide hormone that plays an important role in the regulation of energy homeostasis. Selectively inhibits insulin-stimulated glucose utilization and glycogen deposition in muscle, while not affecting adipocyte glucose metabolism. IAPP function is mediated by the CALCR-RAMPs (AMYRs) receptor complexes. Amylin can also bind CALCR receptor in the absence of RAMPs, although it is more selective for AMYRs. This Bos taurus (Bovine) protein is Islet amyloid polypeptide (IAPP).